Consider the following 366-residue polypeptide: Chorismate synthase (366 aa).

NADP(+)-binding residues include arginine 48 and arginine 54. Residues 132 to 134, 244 to 245, glycine 289, 304 to 308, and arginine 330 each bind FMN; these read RSS, NA, and KPTSS.

This sequence belongs to the chorismate synthase family. As to quaternary structure, homotetramer. The cofactor is FMNH2.

The enzyme catalyses 5-O-(1-carboxyvinyl)-3-phosphoshikimate = chorismate + phosphate. Its pathway is metabolic intermediate biosynthesis; chorismate biosynthesis; chorismate from D-erythrose 4-phosphate and phosphoenolpyruvate: step 7/7. Functionally, catalyzes the anti-1,4-elimination of the C-3 phosphate and the C-6 proR hydrogen from 5-enolpyruvylshikimate-3-phosphate (EPSP) to yield chorismate, which is the branch point compound that serves as the starting substrate for the three terminal pathways of aromatic amino acid biosynthesis. This reaction introduces a second double bond into the aromatic ring system. This is Chorismate synthase from Methylorubrum extorquens (strain PA1) (Methylobacterium extorquens).